The sequence spans 411 residues: Lissencephaly-1 homolog (411 aa).

In terms of domain architecture, LisH spans 7–39; it reads QREELNKAIADYLASNGFMEALESFKKETDMPG. A coiled-coil region spans residues 54–80; sequence TSVIRLQKKVMDLEGRLAEAEKEYISG. Basic and acidic residues predominate over residues 77-89; it reads YISGTPSREKRSP. The disordered stretch occupies residues 77–96; the sequence is YISGTPSREKRSPTEWIPRP. 7 WD repeats span residues 104 to 145, 146 to 187, 188 to 227, 230 to 269, 272 to 334, 337 to 376, and 379 to 411; these read GHRA…RTIK, GHTD…RTMH, GHDHNVSSVCFLPSGDHVVSCSRDKSIKMWEVATGYCVRT, GHRDWVRMVRVNSDGSLLASCSNDQTVRVWVVGTKECKLE, EHDH…ALFT, GHDNWVRGVKFHPGGKYLLSASDDKTLRVWELAHQRCCKT, and AHSHFCTSLDFHRTAPYVVTGSVDQTVKVWECR.

It belongs to the WD repeat LIS1/nudF family.

The protein localises to the cytoplasm. The protein resides in the cytoskeleton. It is found in the microtubule organizing center. It localises to the centrosome. In terms of biological role, positively regulates the activity of the minus-end directed microtubule motor protein dynein. May enhance dynein-mediated microtubule sliding by targeting dynein to the microtubule plus end. Required for several dynein- and microtubule-dependent processes. The protein is Lissencephaly-1 homolog of Ixodes scapularis (Black-legged tick).